We begin with the raw amino-acid sequence, 178 residues long: Cytidylate kinase 2 (178 aa).

7 to 15 (GKSGCGNTT) lines the ATP pocket.

The protein belongs to the cytidylate kinase family. Type 2 subfamily.

Its subcellular location is the cytoplasm. It carries out the reaction CMP + ATP = CDP + ADP. It catalyses the reaction dCMP + ATP = dCDP + ADP. The protein is Cytidylate kinase 2 of Borrelia garinii subsp. bavariensis (strain ATCC BAA-2496 / DSM 23469 / PBi) (Borreliella bavariensis).